A 283-amino-acid chain; its full sequence is E3 ubiquitin-protein ligase MARCHF5 (283 aa).

The RING-CH-type zinc-finger motif lies at 9 to 78; sequence VQQMLDRSCW…PQCNAEYLIV (70 aa). Zn(2+) is bound by residues cysteine 17, cysteine 20, cysteine 36, cysteine 38, histidine 46, cysteine 49, cysteine 68, and cysteine 71. 4 consecutive transmembrane segments (helical) span residues 102–122, 142–162, 212–232, and 241–261; these read FAAAGIMVGSIYWTAVTYGAV, PLFLLIGLPTIPVVLILGKMI, ILCGALVFPTIATIVGKLMFS, and TILGGIAFVAIKGAFKVYFKQ.

The protein resides in the mitochondrion outer membrane. The protein localises to the endoplasmic reticulum membrane. The catalysed reaction is S-ubiquitinyl-[E2 ubiquitin-conjugating enzyme]-L-cysteine + [acceptor protein]-L-lysine = [E2 ubiquitin-conjugating enzyme]-L-cysteine + N(6)-ubiquitinyl-[acceptor protein]-L-lysine.. Its pathway is protein modification; protein ubiquitination. Mitochondrial E3 ubiquitin-protein ligase that plays a crucial role in the control of mitochondrial morphology by acting as a positive regulator of mitochondrial fission. May play a role in the prevention of cell senescence acting as a regulator of mitochondrial quality control. This is E3 ubiquitin-protein ligase MARCHF5 (marchf5) from Xenopus laevis (African clawed frog).